A 188-amino-acid polypeptide reads, in one-letter code: MYMQVESRTGTLLHLKRNPSIRSWSLLVGISSVGLAAAYYSTDTWLWKLFYVAGCAFVALQNLEDWEEAIFDKKSGKAILITYSLYKKLLTLCKGGQEQVVVLLKEIRDVNVEEERVRYFGSGYVIVLRFVTGISHPLTQSAVLGARSDVEAVAKELTKFLEFDLVGSRPQAVEESNDSESDEALDTQ.

The chain crosses the membrane as a helical span at residues 20–42 (SIRSWSLLVGISSVGLAAAYYST).

It belongs to the CYBC1 family.

It is found in the endoplasmic reticulum membrane. Its function is as follows. Functions as a chaperone necessary for a stable expression of the CYBA and CYBB subunits of the cytochrome b-245 heterodimer. This Xenopus tropicalis (Western clawed frog) protein is Cytochrome b-245 chaperone 1 homolog (cybc1).